We begin with the raw amino-acid sequence, 400 residues long: Phosphoglycerate kinase (400 aa).

Substrate is bound by residues 23–25 (DLN), Arg-38, 61–64 (HFGR), Arg-120, and Arg-153. ATP-binding positions include Lys-203, Glu-325, and 355–358 (GGDT).

Belongs to the phosphoglycerate kinase family. Monomer.

Its subcellular location is the cytoplasm. It catalyses the reaction (2R)-3-phosphoglycerate + ATP = (2R)-3-phospho-glyceroyl phosphate + ADP. The protein operates within carbohydrate degradation; glycolysis; pyruvate from D-glyceraldehyde 3-phosphate: step 2/5. The protein is Phosphoglycerate kinase of Agrobacterium fabrum (strain C58 / ATCC 33970) (Agrobacterium tumefaciens (strain C58)).